A 491-amino-acid chain; its full sequence is V-type proton ATPase subunit B 1 (491 aa).

Arg380 provides a ligand contact to ATP.

The protein belongs to the ATPase alpha/beta chains family. In terms of assembly, V-ATPase is a heteromultimeric enzyme made up of two complexes: the ATP-hydrolytic V1 complex and the proton translocation V0 complex. The V1 complex consists of three catalytic AB heterodimers that form a heterohexamer, three peripheral stalks each consisting of EG heterodimers, one central rotor including subunits D and F, and the regulatory subunits C and H. The proton translocation complex V0 consists of the proton transport subunit a, a ring of proteolipid subunits c9c'', rotary subunit d, subunits e and f, and the accessory subunits vah-19/Ac45 and vah-20/PRR. As to expression, expressed ubiquitously. Highly expressed in the H-shaped excretory cell, the excretory pore, the intestine, and hypodermal cells. Expressed in the nervous system. Expressed at low levels in muscles.

In terms of biological role, non-catalytic subunit of the V1 complex of vacuolar(H+)-ATPase (V-ATPase), a multisubunit enzyme composed of a peripheral complex (V1) that hydrolyzes ATP and a membrane integral complex (V0) that translocates protons. V-ATPase is responsible for acidifying and maintaining the pH of intracellular compartments and in some cell types, is targeted to the plasma membrane, where it is responsible for acidifying the extracellular environment. Essential for the proper assembly and activity of V-ATPase. Required maternally for early embryogenesis and zygotically during morphogenesis. Specifically, involved in the clearance of apoptotic cell corpses in embryos. Also, during embryonic development, the V-ATPase is required to repress fusion of epidermal cells probably by negatively regulating eff-1-mediated cell fusion. In neurons, required for necrotic cell death by promoting intracellular acidification. Required for cell death induced by hypoxia. Required for acidification of synaptic vesicles and the release of neurotransmitters from adult neurons. This chain is V-type proton ATPase subunit B 1, found in Caenorhabditis elegans.